An 83-amino-acid polypeptide reads, in one-letter code: U15-theraphotoxin-Cg1a (83 aa).

Positions 1–21 are cleaved as a signal peptide; it reads MKAAILLAFAGLALLSVICHA. The propeptide occupies 22 to 49; it reads SENVEQDSFEEVFSAIFAMEDDLKPKER. Intrachain disulfides connect cysteine 51/cysteine 66, cysteine 58/cysteine 71, and cysteine 65/cysteine 77. Alanine 81 carries the post-translational modification Alanine amide.

The protein belongs to the neurotoxin 10 (Hwtx-1) family. 66 (Jztx-24) subfamily. Expressed by the venom gland.

The protein localises to the secreted. Probable ion channel inhibitor. This is U15-theraphotoxin-Cg1a from Chilobrachys guangxiensis (Chinese earth tiger tarantula).